Here is a 610-residue protein sequence, read N- to C-terminus: Tyrosine-protein kinase Drl (610 aa).

Residues 1-20 (MAPNLLTIGLLLTLIASGQA) form the signal peptide. Topologically, residues 21 to 242 (HLNIFLNLHE…RENLVPPASG (222 aa)) are extracellular. The region spanning 24 to 155 (IFLNLHEVLR…NLIFKRKKIC (132 aa)) is the WIF domain. Residues Asn63, Asn99, and Asn143 are each glycosylated (N-linked (GlcNAc...) asparagine). The disordered stretch occupies residues 202–230 (QAPEKQRPVVTESPVGRGNSGGSKRDFDP). The helical transmembrane segment at 243 to 263 (LVTLIVGGILALVLVSTLILI) threads the bilayer. The Cytoplasmic segment spans residues 264 to 610 (AYCAKGPSKR…EFHTQITRYV (347 aa)). In terms of domain architecture, Protein kinase spans 343–606 (VRLSCLVQEG…ICLSEFHTQI (264 aa)). ATP contacts are provided by residues 349–357 (VQEGNFGRI) and Lys371. Residue Asp468 is the Proton acceptor of the active site. At Tyr498 the chain carries Phosphotyrosine; by autocatalysis.

The protein belongs to the protein kinase superfamily. Tyr protein kinase family. As to expression, in the embryonic abdominal hemisegment, expression is restricted to cell body, axon and growth cone of a cluster of 20 ventral nerve cord interneurons. During muscle growth and attachment events in the embryonic abdominal hemisegment, expression is in somatic muscle fibers 21-23 at 10-13 hours and 2 patches of approximately 15 neighboring epidermal cells (dorsal and ventral attachment sites) at 6-13 hours.

The protein resides in the cell membrane. The enzyme catalyses L-tyrosyl-[protein] + ATP = O-phospho-L-tyrosyl-[protein] + ADP + H(+). In terms of biological role, probable coreceptor of Wnt proteins. Involved in neuronal pathway recognition and ventral muscle attachment site selection. Non-vital for development. May be part of a signal transduction cascade involved in learning and possibly memory. In Drosophila melanogaster (Fruit fly), this protein is Tyrosine-protein kinase Drl (drl).